The primary structure comprises 494 residues: Ceramide glucosyltransferase (494 aa).

Topologically, residues 1–6 are lumenal; sequence MPLLMD. The helical transmembrane segment at 7–27 threads the bilayer; sequence GLAYAGAIWSLIVFCVQAIGL. Over 28–337 the chain is Cytoplasmic; the sequence is YQLFRSYSRP…VRWLRVRKWT (310 aa). Position 95 (aspartate 95) is a short sequence motif, D1. Residue aspartate 160 is a short sequence motif, D2. Aspartate 285 is a short sequence motif (D3). Aspartate 285 acts as the Proton acceptor in catalysis. The (Q/R)XXRW motif lies at 326–330; it reads RRVRW. The chain crosses the membrane as a helical span at residues 338–358; that stretch reads VLLATLVEPGVESMVCCMAFA. Topologically, residues 359-380 are lumenal; sequence HALTTTPWCPNPADWPIPHTWT. The chain crosses the membrane as a helical span at residues 381-401; the sequence is ALWSIWLAAIAVWATLDYVVY. The Cytoplasmic segment spans residues 402–428; it reads HFLHSCRSIEKDADSPDFAQGNELMKR. The helical transmembrane segment at 429–449 threads the bilayer; the sequence is PFGAWILAWIGREILALPIWT. At 450-494 the chain is on the lumenal side; that stretch reads RAVLLGTTVTWRGTKFKVRPDQSVVDIPNAGAKSNGIGSTNRKVR.

This sequence belongs to the glycosyltransferase 2 family.

The protein resides in the golgi apparatus membrane. It carries out the reaction an N-acylsphing-4-enine + UDP-alpha-D-glucose = a beta-D-glucosyl-(1&lt;-&gt;1')-N-acylsphing-4-enine + UDP + H(+). It participates in lipid metabolism; sphingolipid metabolism. Catalyzes the final step in the biosynthesis of the membrane lipid glucosylceramide (GluCer), the transfer of glucose to ceramide. Glucosylceramides play important roles in growth, differentiation and pathogenicity. The sequence is that of Ceramide glucosyltransferase from Pyricularia oryzae (strain 70-15 / ATCC MYA-4617 / FGSC 8958) (Rice blast fungus).